The following is a 98-amino-acid chain: NADH-ubiquinone oxidoreductase chain 4L (98 aa).

Helical transmembrane passes span 1-21 (MSLV…GLLM), 25-45 (HLMS…ILST), and 67-87 (AACE…TYGV).

The protein belongs to the complex I subunit 4L family. As to quaternary structure, core subunit of respiratory chain NADH dehydrogenase (Complex I) which is composed of 45 different subunits.

Its subcellular location is the mitochondrion inner membrane. It catalyses the reaction a ubiquinone + NADH + 5 H(+)(in) = a ubiquinol + NAD(+) + 4 H(+)(out). Functionally, core subunit of the mitochondrial membrane respiratory chain NADH dehydrogenase (Complex I) which catalyzes electron transfer from NADH through the respiratory chain, using ubiquinone as an electron acceptor. Part of the enzyme membrane arm which is embedded in the lipid bilayer and involved in proton translocation. The protein is NADH-ubiquinone oxidoreductase chain 4L (MT-ND4L) of Talpa europaea (European mole).